A 54-amino-acid chain; its full sequence is Large ribosomal subunit protein bL33 (54 aa).

The protein belongs to the bacterial ribosomal protein bL33 family.

In Corynebacterium glutamicum (strain R), this protein is Large ribosomal subunit protein bL33.